A 424-amino-acid chain; its full sequence is Inhibin beta A chain (424 aa).

An N-terminal signal peptide occupies residues M1–S20. A propeptide spanning residues S21–R308 is cleaved from the precursor. N165 is a glycosylation site (N-linked (GlcNAc...) asparagine). Residues K257–R288 are disordered. Positions K261–G273 are enriched in basic and acidic residues. 4 cysteine pairs are disulfide-bonded: C312–C320, C319–C389, C348–C421, and C352–C423.

Belongs to the TGF-beta family. As to quaternary structure, dimeric, linked by one or more disulfide bonds. Inhibin A is a dimer of alpha/INHA and beta-A/INHBA. Activin A is a homodimer of beta-A/INHBA. Activin AB is a dimer of beta-A/INHBA and beta-B/INHBB. Interacts with FST and FSTL3; these interactions prevent activin A interaction to its type II receptor. Activin A interacts with ACVR2A. Activin A interacts with BMPR2. Inhibin A interacts with ACVR1; this interaction creates a non-signaling complex (NSC) that inhibits ACVR1-mediated BMP signaling. Inhibin A interacts with ACVR2A.

It localises to the secreted. Functionally, inhibins/activins are involved in regulating a number of diverse functions such as hypothalamic and pituitary hormone secretion, gonadal hormone secretion, germ cell development and maturation, erythroid differentiation, insulin secretion, nerve cell survival, embryonic axial development or bone growth, depending on their subunit composition. Its function is as follows. Activin A is a homodimer of INHBA that plays a role in several essential biological processes including embryonic development, stem cell maintenance and differentiation, haematopoiesis, cell proliferation and tissue fibrosis. Signals through type I (such as ACVR1B or ACVR1C) and type II receptors (such as ACVR2A, ACVR2B or BMPR2) which, upon ligand binding, phosphorylate SMAD2 and SMAD3 intracellular signaling mediators that form a complex with SMAD4, translocate to the nucleus and modulate gene expression. Can also activate alternative non-canonical intracellular signaling pathways including the p38 MAPK, extracellular signal-regulated kinases 1/2 (ERK1/2) and c-Jun N-terminal kinases (JNKs) to modulate cell migration and differentiation. Alternatively, promotes osteoblastic differentiation via ACVRL1-SMAD1/5/9 pathway. In addition, can engage the type I receptor ACVR1 to form an ACVR1-activin A-type II receptor non-signaling complex (NSC) that renders receptors unavailable for engagement with BMPs, hence resulting in an apparent inhibition of ACVR1-mediated BMP signaling. Inhibin A is a dimer of alpha/INHA and beta-A/INHBA that functions as a feedback regulator in the hypothalamic-pituitary-gonadal (HPG) axis. Inhibits the secretion of FSH from the anterior pituitary gland by acting on pituitary gonadotrope cells. Antagonizes activin A by binding to the proteoglycan, betaglycan, and forming a stable complex with and, thereby, sequestering type II activin receptors while excluding type I receptor. This is Inhibin beta A chain (INHBA) from Felis catus (Cat).